Consider the following 763-residue polypeptide: U3 small nucleolar RNA-associated protein 25 homolog (763 aa).

The disordered stretch occupies residues 1-164; sequence MGKRRSRGRS…SQKSSEEFTD (164 aa). Promotes p53/TP53 degradation stretches follow at residues 1 to 190 and 580 to 642; these read MGKR…SQRT and VQLP…KKEE. The residue at position 10 (Ser10) is a Phosphoserine. The segment covering 25-43 has biased composition (basic and acidic residues); sequence RDFGEEHPFYDRVSKKEVK. Residues Ser52, Ser60, and Ser64 each carry the phosphoserine modification. Positions 54–70 are enriched in basic and acidic residues; sequence DSSHSESESESEQEHVS. A compositionally biased stretch (acidic residues) spans 84–119; sequence EEEEEEEEEEEEEEEDKEEVDDSAVGDSEMNGEDGG. Positions 643–704 are represses p53/TP53 degradation; it reads LNFTHICEYT…YELPTYAHFY (62 aa).

This sequence belongs to the UTP25 family. In terms of assembly, interacts with CAPN3; the interaction is required for CAPN3 translocation to the nucleolus. Phosphorylated. Phosphorylation is required to promote p53/TP53 degradation in the nucleolus which promotes cell cycle progression and liver development.

The protein resides in the nucleus. It is found in the nucleolus. Component of the ribosomal small subunit processome for the biogenesis of ribosomes, functions in pre-ribosomal RNA (pre-rRNA) processing. Essential for embryonic development in part through the regulation of p53 pathway. Controls the expansion growth of digestive organs and liver. Also involved in the sympathetic neuronal development. Mediates, with CAPN3, the proteasome-independent degradation of p53/TP53. The sequence is that of U3 small nucleolar RNA-associated protein 25 homolog from Rattus norvegicus (Rat).